The sequence spans 250 residues: Ino eighty subunit 3 (250 aa).

The interval P29–H70 is disordered. Residues S52 to H70 show a composition bias toward low complexity. Residues S157 and S211 each carry the phosphoserine modification.

In terms of assembly, component of the chromatin-remodeling INO80 complex, at least composed of ARP4, ARP5, ARP8, RVB1, RVB2, TAF14, NHP10, IES1, IES3, IES4, IES6, ACT1, IES2, IES5 and INO80.

It localises to the nucleus. Functionally, probably involved in transcription regulation via its interaction with the INO80 complex, a chromatin-remodeling complex. This Saccharomyces cerevisiae (strain ATCC 204508 / S288c) (Baker's yeast) protein is Ino eighty subunit 3 (IES3).